The sequence spans 543 residues: uncharacterized protein (543 aa).

The TRAM domain occupies 1 to 59 (MLKKNDIVEVEIVDLTHEGAGVAKVDGLVFFVENALPSEKILMRVLKVNKKIGFGKVEK). 4 residues coordinate S-adenosyl-L-methionine: Gln-283, Tyr-312, Glu-333, and Asp-381. The active-site Nucleophile is the Cys-408.

Belongs to the class I-like SAM-binding methyltransferase superfamily. RNA M5U methyltransferase family.

This is an uncharacterized protein from Streptococcus pneumoniae serotype 4 (strain ATCC BAA-334 / TIGR4).